Consider the following 81-residue polypeptide: Putative membrane protein insertion efficiency factor (81 aa).

This sequence belongs to the UPF0161 family.

Its subcellular location is the cell inner membrane. Could be involved in insertion of integral membrane proteins into the membrane. The protein is Putative membrane protein insertion efficiency factor of Thermosipho melanesiensis (strain DSM 12029 / CIP 104789 / BI429).